A 73-amino-acid polypeptide reads, in one-letter code: Translation initiation factor IF-1 (73 aa).

Residues 1 to 73 (MSKKKDVIEM…TRGRITYRYK (73 aa)) form the S1-like domain.

It belongs to the IF-1 family. Component of the 30S ribosomal translation pre-initiation complex which assembles on the 30S ribosome in the order IF-2 and IF-3, IF-1 and N-formylmethionyl-tRNA(fMet); mRNA recruitment can occur at any time during PIC assembly.

The protein localises to the cytoplasm. In terms of biological role, one of the essential components for the initiation of protein synthesis. Stabilizes the binding of IF-2 and IF-3 on the 30S subunit to which N-formylmethionyl-tRNA(fMet) subsequently binds. Helps modulate mRNA selection, yielding the 30S pre-initiation complex (PIC). Upon addition of the 50S ribosomal subunit IF-1, IF-2 and IF-3 are released leaving the mature 70S translation initiation complex. The protein is Translation initiation factor IF-1 of Roseiflexus castenholzii (strain DSM 13941 / HLO8).